A 1104-amino-acid polypeptide reads, in one-letter code: Reverse gyrase (1104 aa).

The RG N-terminal-type zinc finger occupies 1–39 (MAVNSKYHHSCINCGGLNTDERNERGLPCEVCLPEDSPS). 4 residues coordinate Zn(2+): Cys11, Cys14, Cys29, and Cys32. Residues Phe75, Asp78, Gln83, Gly103, Gly105, Lys106, Thr107, and Thr108 each contribute to the ADP site. Residues Gln83 and 100 to 107 (APTGVGKT) each bind ATP. One can recognise a Helicase ATP-binding domain in the interval 87–242 (AKRIVQGKSF…FSTIKQGKIY (156 aa)). The DEAD box motif lies at 203–206 (DDVD). An insert region region spans residues 223–250 (GIPEEIIRKAFSTIKQGKIYERPKNLKP). The Helicase C-terminal domain maps to 300–522 (KLVELLEIFR…EAEANWKELV (223 aa)). A latch region region spans residues 390 to 460 (RFSLELDKAP…KDEDLELIIP (71 aa)). Residues 538–1104 (DTSRSLLIIV…EEIKSLMEEG (567 aa)) are topoisomerase I. Residues 542–699 (SLLIIVESPT…SLRRIEMHEI (158 aa)) enclose the Toprim domain. Glu548 provides a ligand contact to Mg(2+). The RG C-terminal-type zinc-finger motif lies at 618–645 (LKRCRDCGYQFTEDRDECPVCSSKNIDD). Residues Cys621, Cys624, Cys635, and Cys638 each contribute to the Zn(2+) site. Mg(2+) is bound at residue Asp668. In terms of domain architecture, Topo IA-type catalytic spans 715-1101 (DFNLVKAQIV…LLYEEIKSLM (387 aa)). Tyr851 serves as the catalytic O-(5'-phospho-DNA)-tyrosine intermediate.

In the N-terminal section; belongs to the DEAD box helicase family. DDVD subfamily. The protein in the C-terminal section; belongs to the type IA topoisomerase family. Monomer. Requires Zn(2+) as cofactor. Mg(2+) serves as cofactor.

It localises to the cytoplasm. The catalysed reaction is ATP + H2O = ADP + phosphate + H(+). Functionally, modifies the topological state of DNA by introducing positive supercoils in an ATP-dependent process. Increases the linking number in steps of +1. Probably recognizes regions with a low GC content which melt and form a ssDNA bubble, allowing the enzyme to bind and cleave the DNA prior to strand passage; the bubble is probably cleaved by 2 reverse gyrase molecules, one on each strand. Positively supercoils DNA with all NTPS, although it strongly prefers ATP. In the presence of non-hydrolyzable ATP analogs it partially relaxes negative supercoils. Has an intrinsic ATPase activity that is stimulated by DNA; ssDNA is most effective. Binds to single-stranded DNA, transiently cleaves and then rejoins the ends, introducing a positive supercoil in the process. The scissile phosphodiester is attacked by the catalytic tyrosine of the enzyme, resulting in the formation of a DNA-(5'-phosphotyrosyl)-enzyme intermediate. The helicase-like domain is a nucleotide-dependent switch that alternates between a physically closed ATP-bound state with a slight preference for dsDNA, and an open ADP-bound state with a high preference for ssDNA. Whole enzyme has a very poor (k-unwind=0.001 sec(-1)) non-processive helicase activity in the 3'-5' direction that works on short substrates, while the isolated helicase domain has a slightly better helicase activity that works in both directions. Probably involved in rewinding DNA strands in regions of the chromosome that have opened up to allow replication, transcription, DNA repair and/or for DNA protection. In Thermotoga maritima (strain ATCC 43589 / DSM 3109 / JCM 10099 / NBRC 100826 / MSB8), this protein is Reverse gyrase.